A 207-amino-acid chain; its full sequence is MQIKSAEFIKSAAKPVGYPPGDLPEVAFAGRSNVGKSSLINVLVNRRGLVRTSSTPGRTQLLNFFEVNQHFMLVDLPGFGFAKVPVSVKKAWGRMTRTYLEERTNLKAVVLLFDIRREPRDEELQLLDWLEELNIPTIPVITKVDKVTKNRRRAQIRPILEATGLPQEAFSFFSALTREGREDILQRLDVALSDVEDEFGIDVPESE.

The EngB-type G domain occupies 22–194; the sequence is DLPEVAFAGR…LQRLDVALSD (173 aa). Residues 30-37, 57-61, 75-78, 142-145, and 173-175 each bind GTP; these read GRSNVGKS, GRTQL, DLPG, TKVD, and FSA. Mg(2+)-binding residues include Ser37 and Thr59.

This sequence belongs to the TRAFAC class TrmE-Era-EngA-EngB-Septin-like GTPase superfamily. EngB GTPase family. Mg(2+) serves as cofactor.

In terms of biological role, necessary for normal cell division and for the maintenance of normal septation. This Syntrophotalea carbinolica (strain DSM 2380 / NBRC 103641 / GraBd1) (Pelobacter carbinolicus) protein is Probable GTP-binding protein EngB.